A 349-amino-acid chain; its full sequence is S-adenosylmethionine:tRNA ribosyltransferase-isomerase (349 aa).

The protein belongs to the QueA family. Monomer.

Its subcellular location is the cytoplasm. It catalyses the reaction 7-aminomethyl-7-carbaguanosine(34) in tRNA + S-adenosyl-L-methionine = epoxyqueuosine(34) in tRNA + adenine + L-methionine + 2 H(+). Its pathway is tRNA modification; tRNA-queuosine biosynthesis. Transfers and isomerizes the ribose moiety from AdoMet to the 7-aminomethyl group of 7-deazaguanine (preQ1-tRNA) to give epoxyqueuosine (oQ-tRNA). This is S-adenosylmethionine:tRNA ribosyltransferase-isomerase from Pseudomonas putida (strain ATCC 700007 / DSM 6899 / JCM 31910 / BCRC 17059 / LMG 24140 / F1).